The chain runs to 211 residues: Glutathione S-transferase (211 aa).

The region spanning 3 to 87 (DNIVLYYFDA…YLSKKYNICG (85 aa)) is the GST N-terminal domain. Glutathione-binding positions include 58 to 59 (QV), 71 to 72 (QS), Asp105, Lys117, and Thr121. Positions 89 to 211 (SELNEFYADM…YITNRKESVY (123 aa)) constitute a GST C-terminal domain.

Belongs to the GST superfamily. In terms of assembly, homodimer. In the absence of ligands two homodimers may interact to form a tetramer.

It carries out the reaction RX + glutathione = an S-substituted glutathione + a halide anion + H(+). With respect to regulation, inhibited by chloroquine, cibacron blue, ferriprotoporphyrin IX (hemin) and S-hexylglutathione. Conjugation of reduced glutathione to a wide number of exogenous and endogenous hydrophobic electrophiles. May also function as a storage protein or ligandin for parasitotoxic ferriprotoporphyrin IX (hemin). This Plasmodium falciparum (isolate 3D7) protein is Glutathione S-transferase.